The primary structure comprises 502 residues: Maturase K (502 aa).

This sequence belongs to the intron maturase 2 family. MatK subfamily.

The protein resides in the plastid. Its subcellular location is the chloroplast. In terms of biological role, usually encoded in the trnK tRNA gene intron. Probably assists in splicing its own and other chloroplast group II introns. In Brassica oleracea (Wild cabbage), this protein is Maturase K.